The following is a 667-amino-acid chain: DNA ligase (667 aa).

NAD(+) contacts are provided by residues 32 to 36 (DSEYD), 81 to 82 (SL), and Glu-110. Lys-112 functions as the N6-AMP-lysine intermediate in the catalytic mechanism. Positions 133, 167, 283, and 307 each coordinate NAD(+). Cys-401, Cys-404, Cys-419, and Cys-424 together coordinate Zn(2+). In terms of domain architecture, BRCT spans 586-667 (EGHPEFSGKT…FVDKQNELNS (82 aa)).

Belongs to the NAD-dependent DNA ligase family. LigA subfamily. The cofactor is Mg(2+). Mn(2+) serves as cofactor.

It catalyses the reaction NAD(+) + (deoxyribonucleotide)n-3'-hydroxyl + 5'-phospho-(deoxyribonucleotide)m = (deoxyribonucleotide)n+m + AMP + beta-nicotinamide D-nucleotide.. DNA ligase that catalyzes the formation of phosphodiester linkages between 5'-phosphoryl and 3'-hydroxyl groups in double-stranded DNA using NAD as a coenzyme and as the energy source for the reaction. It is essential for DNA replication and repair of damaged DNA. The polypeptide is DNA ligase (Staphylococcus aureus (strain USA300)).